A 202-amino-acid chain; its full sequence is Precorrin-2 dehydrogenase (202 aa).

NAD(+)-binding positions include 20-21 (TI) and 41-42 (PT).

Belongs to the precorrin-2 dehydrogenase / sirohydrochlorin ferrochelatase family. Homodimer.

It catalyses the reaction precorrin-2 + NAD(+) = sirohydrochlorin + NADH + 2 H(+). The protein operates within cofactor biosynthesis; adenosylcobalamin biosynthesis; sirohydrochlorin from precorrin-2: step 1/1. Its pathway is porphyrin-containing compound metabolism; siroheme biosynthesis; sirohydrochlorin from precorrin-2: step 1/1. Its function is as follows. Catalyzes the dehydrogenation of precorrin-2 to form sirohydrochlorin which is used as a precursor in both siroheme biosynthesis and in the anaerobic branch of adenosylcobalamin biosynthesis. It is unable to oxidize precorrin-3. The polypeptide is Precorrin-2 dehydrogenase (sirC) (Priestia megaterium (Bacillus megaterium)).